Consider the following 289-residue polypeptide: Shikimate kinase (289 aa).

84-94 (PVASGLSSSSA) provides a ligand contact to ATP.

Belongs to the GHMP kinase family. Archaeal shikimate kinase subfamily.

The protein localises to the cytoplasm. The enzyme catalyses shikimate + ATP = 3-phosphoshikimate + ADP + H(+). It functions in the pathway metabolic intermediate biosynthesis; chorismate biosynthesis; chorismate from D-erythrose 4-phosphate and phosphoenolpyruvate: step 5/7. The protein is Shikimate kinase (aroK) of Methanothermobacter thermautotrophicus (strain ATCC 29096 / DSM 1053 / JCM 10044 / NBRC 100330 / Delta H) (Methanobacterium thermoautotrophicum).